A 102-amino-acid polypeptide reads, in one-letter code: Large ribosomal subunit protein bL21 (102 aa).

It belongs to the bacterial ribosomal protein bL21 family. In terms of assembly, part of the 50S ribosomal subunit. Contacts protein L20.

This protein binds to 23S rRNA in the presence of protein L20. This Campylobacter jejuni subsp. jejuni serotype O:6 (strain 81116 / NCTC 11828) protein is Large ribosomal subunit protein bL21.